We begin with the raw amino-acid sequence, 1683 residues long: A-kinase anchor protein SPHKAP (1683 aa).

2 stretches are compositionally biased toward polar residues: residues 1 to 14 and 289 to 301; these read MDVN…SNVE and AENT…NPSA. Disordered regions lie at residues 1–30, 275–320, and 582–601; these read MDVN…ITSS, RMPS…ATNY, and LLPT…LVTE. Residues 910–927 form a PKA-RII subunit binding domain region; sequence FAEELAETVVSMATEIAA. The disordered stretch occupies residues 960 to 983; sequence LKRKKENSGTGSTVRKHKPPRLSE. Phosphoserine occurs at positions 1006, 1066, 1088, 1101, 1102, 1105, 1240, and 1269. 2 disordered regions span residues 1359 to 1387 and 1415 to 1518; these read VTEG…PTRE and ETDQ…DTSS. Polar residues predominate over residues 1362 to 1371; that stretch reads GNCSPVSSPS. Positions 1469 to 1490 are enriched in basic and acidic residues; sequence LETREELEVDVLKEDITLDESR. The segment covering 1492-1504 has biased composition (low complexity); that stretch reads PPSSSEESTGSWS.

This sequence belongs to the AKAP110 family. Interacts (via the PKA-RII subunit binding domain) with the RI subunit of PKA. Interacts with SPHK1; the interaction greatly reduces SPHK1 activity. Abundant in heart ventricle (at protein level).

It is found in the cytoplasm. Its function is as follows. Anchoring protein that binds preferentially to the type I regulatory subunit of c-AMP-dependent protein kinase (PKA type I) and targets it to distinct subcellular compartments. May act as a converging factor linking cAMP and sphingosine signaling pathways. Plays a regulatory role in the modulation of SPHK1. This Rattus norvegicus (Rat) protein is A-kinase anchor protein SPHKAP (Sphkap).